The primary structure comprises 156 residues: Small ribosomal subunit protein uS7 (156 aa).

Belongs to the universal ribosomal protein uS7 family. Part of the 30S ribosomal subunit. Contacts proteins S9 and S11.

Its function is as follows. One of the primary rRNA binding proteins, it binds directly to 16S rRNA where it nucleates assembly of the head domain of the 30S subunit. Is located at the subunit interface close to the decoding center, probably blocks exit of the E-site tRNA. In Acinetobacter baylyi (strain ATCC 33305 / BD413 / ADP1), this protein is Small ribosomal subunit protein uS7.